The following is a 232-amino-acid chain: Ubiquinone biosynthesis O-methyltransferase (232 aa).

Residues Arg-36, Gly-55, Asp-76, and Leu-120 each coordinate S-adenosyl-L-methionine.

Belongs to the methyltransferase superfamily. UbiG/COQ3 family.

It carries out the reaction a 3-demethylubiquinol + S-adenosyl-L-methionine = a ubiquinol + S-adenosyl-L-homocysteine + H(+). The enzyme catalyses a 3-(all-trans-polyprenyl)benzene-1,2-diol + S-adenosyl-L-methionine = a 2-methoxy-6-(all-trans-polyprenyl)phenol + S-adenosyl-L-homocysteine + H(+). The protein operates within cofactor biosynthesis; ubiquinone biosynthesis. In terms of biological role, O-methyltransferase that catalyzes the 2 O-methylation steps in the ubiquinone biosynthetic pathway. The chain is Ubiquinone biosynthesis O-methyltransferase from Pseudomonas paraeruginosa (strain DSM 24068 / PA7) (Pseudomonas aeruginosa (strain PA7)).